Consider the following 467-residue polypeptide: Fumarate hydratase class II (467 aa).

Residues 98–100 (SGT), Arg-126, 129–132 (HPND), 139–141 (SSN), and Thr-187 contribute to the substrate site. Catalysis depends on His-188, which acts as the Proton donor/acceptor. Ser-318 is a catalytic residue. Residues Ser-319 and 324-326 (KVN) each bind substrate.

Belongs to the class-II fumarase/aspartase family. Fumarase subfamily. As to quaternary structure, homotetramer.

It localises to the cytoplasm. It carries out the reaction (S)-malate = fumarate + H2O. It participates in carbohydrate metabolism; tricarboxylic acid cycle; (S)-malate from fumarate: step 1/1. Inhibited by ATP, citrate and S-2,3-dicarboxyaziridine. Its function is as follows. Involved in the TCA cycle. FumC seems to be a backup enzyme for FumA under conditions of iron limitation and oxidative stress. Catalyzes the stereospecific interconversion of fumarate to L-malate. This chain is Fumarate hydratase class II, found in Escherichia coli (strain K12).